The following is a 122-amino-acid chain: Large ribosomal subunit protein uL14 (122 aa).

The protein belongs to the universal ribosomal protein uL14 family. In terms of assembly, part of the 50S ribosomal subunit. Forms a cluster with proteins L3 and L19. In the 70S ribosome, L14 and L19 interact and together make contacts with the 16S rRNA in bridges B5 and B8.

Its function is as follows. Binds to 23S rRNA. Forms part of two intersubunit bridges in the 70S ribosome. The chain is Large ribosomal subunit protein uL14 from Chelativorans sp. (strain BNC1).